A 250-amino-acid chain; its full sequence is Probable transcriptional regulatory protein Ctha_1786 (250 aa).

The protein belongs to the TACO1 family.

The protein localises to the cytoplasm. The polypeptide is Probable transcriptional regulatory protein Ctha_1786 (Chloroherpeton thalassium (strain ATCC 35110 / GB-78)).